The sequence spans 560 residues: Cytosolic purine 5'-nucleotidase (560 aa).

Asp-52 (nucleophile) is an active-site residue. Positions 52 and 54 each coordinate IMP. The Mg(2+) site is built by Asp-52 and Asp-54. Asp-54 serves as the catalytic Proton donor. 2 residues coordinate ATP: Arg-144 and Asn-154. 7 residues coordinate IMP: Arg-202, Asp-206, Lys-215, Thr-249, Asn-250, Ser-251, and Lys-292. Residue Asp-351 coordinates Mg(2+). Ser-418 carries the post-translational modification Phosphoserine. Residues Gln-453 and Arg-456 each contribute to the ATP site. Phosphoserine is present on residues Ser-502, Ser-511, and Ser-527. Residues 541-560 (PQEITHCHDEDDDEEEEEEE) form a disordered region. The tract at residues 548 to 560 (HDEDDDEEEEEEE) is required for tetramer assembly. Positions 550–560 (EDDDEEEEEEE) are enriched in acidic residues.

It belongs to the 5'(3')-deoxyribonucleotidase family. Homotetramer. Mg(2+) is required as a cofactor.

It is found in the cytoplasm. Its subcellular location is the cytosol. It carries out the reaction a ribonucleoside 5'-phosphate + H2O = a ribonucleoside + phosphate. The catalysed reaction is a 2'-deoxyribonucleoside + a ribonucleoside 5'-phosphate = a ribonucleoside + a 2'-deoxyribonucleoside 5'-phosphate. The enzyme catalyses IMP + H2O = inosine + phosphate. It catalyses the reaction GMP + H2O = guanosine + phosphate. It carries out the reaction dGMP + H2O = 2'-deoxyguanosine + phosphate. The catalysed reaction is dIMP + H2O = 2'-deoxyinosine + phosphate. The enzyme catalyses XMP + H2O = xanthosine + phosphate. It catalyses the reaction inosine + GMP = guanosine + IMP. It carries out the reaction dGMP + inosine = 2'-deoxyguanosine + IMP. The catalysed reaction is dIMP + inosine = 2'-deoxyinosine + IMP. The enzyme catalyses inosine + UMP = uridine + IMP. It catalyses the reaction inosine + CMP = cytidine + IMP. It carries out the reaction inosine + AMP = IMP + adenosine. With respect to regulation, allosterically activated by various compounds including ATP, 2,3-BPG/2,3-Bisphosphoglyceric acid and Ap4A/P1,P4-bis(5'-adenosyl) tetraphosphate. Binding of an allosteric activator is a prerequisiste to magnesium and substrate binding. Inhibited by inorganic phosphate. Functionally, broad specificity cytosolic 5'-nucleotidase that catalyzes the dephosphorylation of 6-hydroxypurine nucleoside 5'-monophosphates. In addition, possesses a phosphotransferase activity by which it can transfer a phosphate from a donor nucleoside monophosphate to an acceptor nucleoside, preferably inosine, deoxyinosine and guanosine. Has the highest activities for IMP and GMP followed by dIMP, dGMP and XMP. Could also catalyze the transfer of phosphates from pyrimidine monophosphates but with lower efficiency. Through these activities regulates the purine nucleoside/nucleotide pools within the cell. This is Cytosolic purine 5'-nucleotidase from Mus musculus (Mouse).